Reading from the N-terminus, the 512-residue chain is Dihydroniloticin synthase CYP71CD2 (512 aa).

A helical transmembrane segment spans residues 1 to 21 (MNLQLDYFSITSFLVFLVVLF). Cys449 contributes to the heme binding site.

Belongs to the cytochrome P450 family. Heme serves as cofactor.

The protein resides in the membrane. It catalyses the reaction tirucalla-7,24-dien-3beta-ol + 2 reduced [NADPH--hemoprotein reductase] + 2 O2 = dihydroniloticin + 2 oxidized [NADPH--hemoprotein reductase] + 2 H2O + 2 H(+). It functions in the pathway secondary metabolite biosynthesis; terpenoid biosynthesis. Functionally, monooxygenase involved in the biosynthesis of limonoids triterpene natural products such as azadirachtin, an antifeedant widely used as bioinsecticide, and possessing many medicinal applications including anti-tumoral, anti-malarial, anti-rheumatic, antibacterial, anti-inflammatory, anti-pyretic and diuretic effects. Catalyzes the conversion of tirucalladienol to dihydroniloticin. In Azadirachta indica (Neem tree), this protein is Dihydroniloticin synthase CYP71CD2.